The sequence spans 456 residues: MKLNRRHFLKTAGLSAAGILTSQLPLSSAEAVPKKPAAGPSVMGLVVPKMDTVRVGFIGVGQRGSGHVKHFCHLDGVEIKAICDTDPQVLDESIQFVTTQGLPKPAQYTGSEQAYKDLLNRDDIDIVIISTPWEWHAPMAINTMESGKHAFVEVPLALTVDECWQIVDTAERTQKNCMMMENVNYGRDELMVLNMVRQGLFGELLHGEAAYIHELRWQMKEIDSKTGSWRTYWHTKRNGNLYPTHGLGPVSQYMNINRGDRFDYLTSMSSPALGRGLYAKREFPADHERNQLDYINGDINTSLIKTVKGRTIMVQHDTTTPRPYSRHNLIQGTNGVFAGFPNRIAIEQAGSDSYHKWDMDMAKWYAKYDHPLWLQMGQEAERNGGHGGMDFLMLWRMVYCLRNSEPLDQDVYDGTAWSVVNILSQESVNNRSNSVNFPDFTRGAWKTGKPLGIIGT.

Positions 1 to 31 (MKLNRRHFLKTAGLSAAGILTSQLPLSSAEA) form a signal peptide, tat-type signal. NAD(+)-binding positions include 62–63 (QR), Asp-84, 133–136 (WEWH), 153–154 (EV), and Asn-182. Residues Tyr-211, Arg-230, 242-245 (YPTH), and Tyr-324 contribute to the substrate site. Tyr-242 contacts NAD(+).

It belongs to the Gfo/Idh/MocA family. Glycosyl hydrolase 109 subfamily. NAD(+) is required as a cofactor. Predicted to be exported by the Tat system. The position of the signal peptide cleavage has not been experimentally proven.

Functionally, glycosidase. The sequence is that of Glycosyl hydrolase family 109 protein from Shewanella pealeana (strain ATCC 700345 / ANG-SQ1).